The chain runs to 147 residues: Large ribosomal subunit protein uL13 (147 aa).

The protein belongs to the universal ribosomal protein uL13 family. In terms of assembly, part of the 50S ribosomal subunit.

In terms of biological role, this protein is one of the early assembly proteins of the 50S ribosomal subunit, although it is not seen to bind rRNA by itself. It is important during the early stages of 50S assembly. This chain is Large ribosomal subunit protein uL13, found in Frankia casuarinae (strain DSM 45818 / CECT 9043 / HFP020203 / CcI3).